Consider the following 2055-residue polypeptide: Dedicator of cytokinesis protein 9 (2055 aa).

Residues serine 178 and serine 181 each carry the phosphoserine modification. A PH domain is found at 185-292 (GITKHGWLYK…WVTVLNKILQ (108 aa)). Positions 301-326 (EKRNGDPHEDDEQSKLEGSGSGLDSY) are disordered. Phosphoserine occurs at positions 444 and 453. The 179-residue stretch at 649–827 (SNHLYVYPKY…PLLKISTHLV (179 aa)) folds into the C2 DOCK-type domain. Residues serine 936 and serine 1244 each carry the phosphoserine modification. Phosphothreonine is present on threonine 1250. The interval 1253 to 1291 (INSVRNADSRGSLISTDSGNSLPDRNPEKSNSLDKQQQS) is disordered. A phosphoserine mark is found at serine 1264, serine 1270, and serine 1273. Residues 1264–1276 (SLISTDSGNSLPD) are compositionally biased toward polar residues. One can recognise a DOCKER domain in the interval 1614–2055 (KSYASTPELR…LSDIMREQMG (442 aa)). Residues 1679-2055 (DEEASMMEDV…LSDIMREQMG (377 aa)) are interaction with CDC42.

It belongs to the DOCK family. In terms of assembly, homodimer. Interacts preferentially with nucleotide-depleted CDC42. In terms of tissue distribution, expressed in lung. Also detected in Peyers patches, thymus, brain and lymph nodes. Expressed in Purkinje cells.

It localises to the endomembrane system. In terms of biological role, guanine nucleotide-exchange factor (GEF) that activates CDC42 by exchanging bound GDP for free GTP. Overexpression induces filopodia formation. The sequence is that of Dedicator of cytokinesis protein 9 from Mus musculus (Mouse).